The sequence spans 130 residues: Small ribosomal subunit protein uS11c (130 aa).

It belongs to the universal ribosomal protein uS11 family. Part of the 30S ribosomal subunit.

Its subcellular location is the plastid. The protein localises to the chloroplast. This Marchantia polymorpha (Common liverwort) protein is Small ribosomal subunit protein uS11c.